The following is a 275-amino-acid chain: Ribosomal RNA small subunit methyltransferase A (275 aa).

Residues Asn-28, Leu-30, Gly-55, Glu-77, Asp-103, and Asn-123 each contribute to the S-adenosyl-L-methionine site.

Belongs to the class I-like SAM-binding methyltransferase superfamily. rRNA adenine N(6)-methyltransferase family. RsmA subfamily.

The protein localises to the cytoplasm. The catalysed reaction is adenosine(1518)/adenosine(1519) in 16S rRNA + 4 S-adenosyl-L-methionine = N(6)-dimethyladenosine(1518)/N(6)-dimethyladenosine(1519) in 16S rRNA + 4 S-adenosyl-L-homocysteine + 4 H(+). Functionally, specifically dimethylates two adjacent adenosines (A1518 and A1519) in the loop of a conserved hairpin near the 3'-end of 16S rRNA in the 30S particle. May play a critical role in biogenesis of 30S subunits. The sequence is that of Ribosomal RNA small subunit methyltransferase A from Allorhizobium ampelinum (strain ATCC BAA-846 / DSM 112012 / S4) (Agrobacterium vitis (strain S4)).